The chain runs to 831 residues: MTDNQEIKPKKLTLGNSKLLLNKSFDSLTGVQSFVNAKSKTLVEVRKSSIGSTTTISLNKERNSLDQTVIDSNKEEFNRRLSILKKAAEQSKLYDSAQISTLSKLASINQSVNSKNEQFTTDKAVEQKQQDIEDTKVEIGTKIVQDDEDIRSQIPNKKKETFAKSLLVGMRTRYGIEAESALEKIGDNKVVVPKIKLEEPKKFKKADLFNMLSDDENGSGRTRSLASIKRAREKEKRKLVSQIPEKVYREVTIPEVIGVGDLANAMSERVADVIKELMKLGILANASQTIDADTAELVATNLGHTVTRVQESDVENVLINDDKVEDLRTRAPVVTVMGHVDHGKTSLLDALKSTDIAAGELGGITQHIGAYRVTLSDCKAITFIDTPGHEAFSEMRSRGAKVTDIVIIVVAADDGIKTQTVEAINHAKAAGVPIIVAINKIDKPDIDIERIKNELYVHEIIGEEAGGDVIFIPISALKKINLDKLEEAILLISEMQDLKASPFGLAAGVVIESKIEKGRGTLTTILVQRGTLRNGDIIIAGTSYGKVKKMINDKGREILEATPSVPVEIQGLNEVPFAGDQFNVVQNEKQAKDIAEYRIRLAKEKKISVTSRSSLEELLLKASGNSKIKELPLIIKCDVQGSIEAIAGSLLKLPSDEIKLRILHSGVGPITESDVSLAHVSSAIVVGFNVRAGTNALTAAEKTKVDIRYYSIIYNLIDDVKAIMSGMLDPIVREQYIGSVEIRQVFNITKIGKIAGSYVTKGIIKKGAGVRLLRDNVVIHAGKLKTLKRFKDEVKEVREGYECGIAFENYEDIREGDTVEVFELVQEQRQL.

The region spanning 329–499 is the tr-type G domain; the sequence is TRAPVVTVMG…LLISEMQDLK (171 aa). Positions 338–345 are G1; it reads GHVDHGKT. Position 338 to 345 (338 to 345) interacts with GTP; that stretch reads GHVDHGKT. A G2 region spans residues 363-367; that stretch reads GITQH. The interval 385 to 388 is G3; it reads DTPG. GTP-binding positions include 385–389 and 439–442; these read DTPGH and NKID. Residues 439–442 form a G4 region; that stretch reads NKID. The segment at 475–477 is G5; the sequence is SAL.

Belongs to the TRAFAC class translation factor GTPase superfamily. Classic translation factor GTPase family. IF-2 subfamily.

The protein resides in the cytoplasm. One of the essential components for the initiation of protein synthesis. Protects formylmethionyl-tRNA from spontaneous hydrolysis and promotes its binding to the 30S ribosomal subunits. Also involved in the hydrolysis of GTP during the formation of the 70S ribosomal complex. This Rickettsia typhi (strain ATCC VR-144 / Wilmington) protein is Translation initiation factor IF-2.